Consider the following 181-residue polypeptide: Germinal center-associated signaling and motility protein (181 aa).

S102 carries the phosphoserine modification. The segment covering 117–128 (AERHKESSRGTE) has biased composition (basic and acidic residues). The interval 117–181 (AERHKESSRG…PYETHFSYPQ (65 aa)) is disordered. Phosphotyrosine is present on Y150.

In terms of assembly, interacts with ACTB and MYH2; the interaction with MYH2 is increased by IL6-induced phosphorylation. Interacts (via C-terminus) with ARHGEF11 (via DH domain). Interacts with ARHGEF12. Interacts with SYK; the interaction increases after B-cell receptor stimulation, resulting in enhanced SYK autophosphorylation and activity. In terms of processing, phosphorylation on tyrosine residues can be induced by IL6. Phosphorylation is mediated by LYN. Post-translationally, targeted by the ubiquitin E3 ligase subunit FBXO10 to mediate its ubiquitination and degradation. As to expression, highly expressed in normal germinal center (GC) B-cells. Expressed in spleen and, to a lesser extent, bone marrow.

It localises to the cytoplasm. The protein localises to the cell membrane. Its function is as follows. Involved in the negative regulation of lymphocyte motility. It mediates the migration-inhibitory effects of IL6. Serves as a positive regulator of the RhoA signaling pathway. Enhancement of RhoA activation results in inhibition of lymphocyte and lymphoma cell motility by activation of its downstream effector ROCK. Is a regulator of B-cell receptor signaling, that acts through SYK kinase activation. This Mus musculus (Mouse) protein is Germinal center-associated signaling and motility protein (Gcsam).